Here is a 262-residue protein sequence, read N- to C-terminus: Hemin import ATP-binding protein HmuV (262 aa).

In terms of domain architecture, ABC transporter spans 2-241; the sequence is IRASDISVRL…ETMEAVFGCR (240 aa). 34-41 is an ATP binding site; sequence GPNGSGKT.

The protein belongs to the ABC transporter superfamily. Heme (hemin) importer (TC 3.A.1.14.5) family. As to quaternary structure, the complex is composed of two ATP-binding proteins (HmuV), two transmembrane proteins (HmuU) and a solute-binding protein (HmuT).

It localises to the cell inner membrane. Its function is as follows. Part of the ABC transporter complex HmuTUV involved in hemin import. Responsible for energy coupling to the transport system. The protein is Hemin import ATP-binding protein HmuV of Rhizobium meliloti (strain 1021) (Ensifer meliloti).